The primary structure comprises 210 residues: MARSSHTSKSSASWLKEHFDDRYVQRSWQDGYRSRASYKLLELDAKDALLKPGMTVIDLGAAPGGWSQIAADKVGDKGCVIASDILEMDALAGVTFVQGDFTEMEVLEQILVALEGRRVDLVMSDMAPNMSGMAAIDQPQAMYLVELALDLARQTLSPGGRFLAKVFQGEGFDAYLKELRGSFRKVVTRKPEASRARSREVYLLAEGFHG.

5 residues coordinate S-adenosyl-L-methionine: Gly64, Trp66, Asp84, Asp100, and Asp125. Residue Lys165 is the Proton acceptor of the active site.

The protein belongs to the class I-like SAM-binding methyltransferase superfamily. RNA methyltransferase RlmE family.

It is found in the cytoplasm. It catalyses the reaction uridine(2552) in 23S rRNA + S-adenosyl-L-methionine = 2'-O-methyluridine(2552) in 23S rRNA + S-adenosyl-L-homocysteine + H(+). Its function is as follows. Specifically methylates the uridine in position 2552 of 23S rRNA at the 2'-O position of the ribose in the fully assembled 50S ribosomal subunit. The polypeptide is Ribosomal RNA large subunit methyltransferase E (Chromohalobacter salexigens (strain ATCC BAA-138 / DSM 3043 / CIP 106854 / NCIMB 13768 / 1H11)).